Reading from the N-terminus, the 79-residue chain is Acyl carrier protein (79 aa).

The 76-residue stretch at 2–77 (ESIEQRVKKI…QAVDYINSHG (76 aa)) folds into the Carrier domain. Ser-37 carries the O-(pantetheine 4'-phosphoryl)serine modification.

The protein belongs to the acyl carrier protein (ACP) family. 4'-phosphopantetheine is transferred from CoA to a specific serine of apo-ACP by AcpS. This modification is essential for activity because fatty acids are bound in thioester linkage to the sulfhydryl of the prosthetic group.

Its subcellular location is the cytoplasm. Its pathway is lipid metabolism; fatty acid biosynthesis. Carrier of the growing fatty acid chain in fatty acid biosynthesis. The protein is Acyl carrier protein of Bordetella parapertussis (strain 12822 / ATCC BAA-587 / NCTC 13253).